A 570-amino-acid chain; its full sequence is Adenine deaminase 2 (570 aa).

The protein belongs to the metallo-dependent hydrolases superfamily. Adenine deaminase family. Mn(2+) serves as cofactor.

It carries out the reaction adenine + H2O + H(+) = hypoxanthine + NH4(+). The chain is Adenine deaminase 2 from Carboxydothermus hydrogenoformans (strain ATCC BAA-161 / DSM 6008 / Z-2901).